Consider the following 227-residue polypeptide: Protein p26 (227 aa).

Self-associates.

The protein resides in the host cell junction. Its subcellular location is the host plasmodesma. In Lettuce infectious yellows virus (isolate United States/92) (LIYV), this protein is Protein p26.